The following is a 371-amino-acid chain: Cyclic AMP-responsive element-binding protein 3 (371 aa).

Positions 1–92 (MELELDAGDQ…LPRETVSMDL (92 aa)) are transcription activation (acidic). Residues 1 to 230 (MELELDAGDQ…SNKTSSSSTC (230 aa)) lie on the Cytoplasmic side of the membrane. 2 short sequence motifs (LXXLL motif) span residues 13 to 17 (LAFLL) and 54 to 58 (LCSLL). The HCFC1-binding-motif (HBM) motif lies at 78-81 (DHTY). The region spanning 150–213 (ILKRVRRKIR…LSLLDQLRKL (64 aa)) is the bZIP domain. The segment at 152 to 184 (KRVRRKIRNKRSAQESRRKKKVYVGGLESRVLK) is basic motif. A leucine-zipper region spans residues 192 to 213 (LQNKVQLLEEQNLSLLDQLRKL). The helical; Signal-anchor for type II membrane protein transmembrane segment at 231-247 (ILVLLVSFCLLLVPAMY) threads the bilayer. Over 248-371 (SSDTRGSLPA…SVILQDRYSG (124 aa)) the chain is Lumenal. Residues asparagine 307 and asparagine 348 are each glycosylated (N-linked (GlcNAc...) asparagine).

The protein belongs to the bZIP family. ATF subfamily. In terms of assembly, homodimer. Isoform 1 interacts with HCFC1; the interaction is required to stimulate CREB3 transcriptional activity. Isoform 1 interacts with CREBZF; the interaction occurs only in combination with HCFC1. Isoform 1 interacts (via central part and transmembrane region) with DCSTAMP (via C-terminus cytoplasmic domain). Isoform 1 interacts with OS9. Isoform 1 interacts (via leucine-zipper domain) with CREBRF (via leucine-zipper domain); the interaction occurs only after CREB3 activation and promotes CREB3 degradation. Isoform 1 interacts (via C-terminal domain) with CCR1. As to quaternary structure, (Microbial infection) Interacts with the HCV core protein; homodimerization is prevented by the HCV core protein. Isoform 1 interacts (via leucine-zipper and transmembrane domains) with HIV-1 TMgp41 (via cytoplasmic domain); the interaction reduces CREB3 stability. Processed cyclic AMP-responsive element-binding protein 3 interacts with HIV-1 Tat. In terms of processing, first proteolytically cleaved by site-1 protease (S1P) that generates membrane-associated N-terminus and a luminal C-terminus forms. The membrane-associated N-terminus form is further proteolytically processed probably by the site-2 protease (S2P) through a regulated intramembrane proteolysis (RIP), releasing the transcriptional active processed cyclic AMP-responsive element-binding protein 3 form, which is transported to the nucleus. The proteolytic cleavage is strongly induced during dendritic cell (DC) maturation and inhibited by DCSTAMP. That form is rapidly degraded. Post-translationally, N-glycosylated. As to expression, ubiquitously expressed. Expressed in dendritic cells (DC). Weakly expressed in monocytes (at protein level).

It is found in the endoplasmic reticulum membrane. Its subcellular location is the golgi apparatus. It localises to the cytoplasm. The protein resides in the nucleus. Endoplasmic reticulum (ER)-bound sequence-specific transcription factor that directly binds DNA and activates transcription. Plays a role in the unfolded protein response (UPR), promoting cell survival versus ER stress-induced apoptotic cell death. Also involved in cell proliferation, migration and differentiation, tumor suppression and inflammatory gene expression. Acts as a positive regulator of LKN-1/CCL15-induced chemotaxis signaling of leukocyte cell migration. Associates with chromatin to the HERPUD1 promoter. Also induces transcriptional activation of chemokine receptors. Functionally, (Microbial infection) Plays a role in human immunodeficiency virus type 1 (HIV-1) virus protein expression. Its function is as follows. (Microbial infection) May play a role as a cellular tumor suppressor that is targeted by the hepatitis C virus (HCV) core protein. In terms of biological role, (Microbial infection) Plays a role in herpes simplex virus-1 (HSV-1) latent infection and reactivation from latency. Represses the VP16-mediated transactivation of immediate early genes of the HSV-1 virus by sequestering host cell factor-1 HCFC1 in the ER membrane of sensory neurons, thereby preventing the initiation of the replicative cascade leading to latent infection. Functions as a negative transcriptional regulator in ligand-induced transcriptional activation of the glucocorticoid receptor NR3C1 by recruiting and activating histone deacetylases (HDAC1, HDAC2 and HDAC6). Also decreases the acetylation level of histone H4. Does not promote the chemotactic activity of leukocyte cells. Functionally, this is the transcriptionally active form that translocates to the nucleus and activates unfolded protein response (UPR) target genes during endoplasmic reticulum (ER) stress response. Binds the cAMP response element (CRE) (consensus: 5'-GTGACGT[AG][AG]-3') and C/EBP sequences present in many promoters to activate transcription of the genes. Binds to the unfolded protein response element (UPRE) consensus sequences sites. Binds DNA to the 5'-CCAC[GA]-3'half of ERSE II (5'-ATTGG-N-CCACG-3'). Its function is as follows. (Microbial infection) Activates transcription of genes required for reactivation of the latent HSV-1 virus. It's transcriptional activity is inhibited by CREBZF in a HCFC1-dependent manner, by the viral transactivator protein VP16. Binds DNA to the cAMP response element (CRE) (consensus: 5'-GTGACGT[AG][AG]-3') and C/EBP sequences present in many viral promoters. In terms of biological role, (Microbial infection) It's transcriptional activity is inhibited by CREBZF in a HCFC1-dependent manner, by the viral transactivator HCV core protein. The protein is Cyclic AMP-responsive element-binding protein 3 (CREB3) of Homo sapiens (Human).